A 277-amino-acid polypeptide reads, in one-letter code: Phosphonoacetaldehyde hydrolase-like protein (277 aa).

Belongs to the HAD-like hydrolase superfamily. PhnX family.

The sequence is that of Phosphonoacetaldehyde hydrolase-like protein (phnX2) from Syntrophobacter fumaroxidans (strain DSM 10017 / MPOB).